We begin with the raw amino-acid sequence, 352 residues long: A-type ATP synthase subunit C (352 aa).

Belongs to the V-ATPase V0D/AC39 subunit family. Has multiple subunits with at least A(3), B(3), C, D, E, F, H, I and proteolipid K(x).

Its subcellular location is the cell membrane. Functionally, component of the A-type ATP synthase that produces ATP from ADP in the presence of a proton gradient across the membrane. The protein is A-type ATP synthase subunit C of Halobacterium salinarum (strain ATCC 29341 / DSM 671 / R1).